Reading from the N-terminus, the 398-residue chain is Elongation factor Tu (398 aa).

In terms of domain architecture, tr-type G spans 10–207 (KPHVNIGTIG…TVDSYIPEPE (198 aa)). Residues 19 to 26 (GHVDHGKT) are G1. Residue 19-26 (GHVDHGKT) participates in GTP binding. Threonine 26 is a Mg(2+) binding site. Residues 63–67 (GITIN) are G2. Positions 84–87 (DAPG) are G3. Residues 84 to 88 (DAPGH) and 139 to 142 (NKVD) contribute to the GTP site. A G4 region spans residues 139-142 (NKVD). The tract at residues 177–179 (SAL) is G5.

Belongs to the TRAFAC class translation factor GTPase superfamily. Classic translation factor GTPase family. EF-Tu/EF-1A subfamily. Monomer.

Its subcellular location is the cytoplasm. It carries out the reaction GTP + H2O = GDP + phosphate + H(+). GTP hydrolase that promotes the GTP-dependent binding of aminoacyl-tRNA to the A-site of ribosomes during protein biosynthesis. The polypeptide is Elongation factor Tu (Streptococcus equi subsp. zooepidemicus (strain MGCS10565)).